The sequence spans 342 residues: Tryptophan--tRNA ligase (342 aa).

ATP contacts are provided by residues 19 to 21 (QPS) and 27 to 28 (GN). Residues 20 to 28 (PSGELTIGN) carry the 'HIGH' region motif. Aspartate 143 lines the L-tryptophan pocket. Residues 155–157 (GED), valine 194, and 203–207 (KMSKS) contribute to the ATP site. The short motif at 203–207 (KMSKS) is the 'KMSKS' region element.

This sequence belongs to the class-I aminoacyl-tRNA synthetase family. As to quaternary structure, homodimer.

Its subcellular location is the cytoplasm. The enzyme catalyses tRNA(Trp) + L-tryptophan + ATP = L-tryptophyl-tRNA(Trp) + AMP + diphosphate + H(+). Catalyzes the attachment of tryptophan to tRNA(Trp). The polypeptide is Tryptophan--tRNA ligase (Yersinia pestis).